The chain runs to 825 residues: Glycerol-3-phosphate acyltransferase (825 aa).

The short motif at 304 to 309 (CHRSHM) is the HXXXXD motif element. Residues 803–825 (MPAETSNQPEAPETPEPEGKTES) are disordered.

The protein belongs to the GPAT/DAPAT family.

The protein localises to the cell inner membrane. It carries out the reaction sn-glycerol 3-phosphate + an acyl-CoA = a 1-acyl-sn-glycero-3-phosphate + CoA. The protein operates within phospholipid metabolism; CDP-diacylglycerol biosynthesis; CDP-diacylglycerol from sn-glycerol 3-phosphate: step 1/3. This chain is Glycerol-3-phosphate acyltransferase, found in Yersinia pseudotuberculosis serotype O:1b (strain IP 31758).